A 107-amino-acid chain; its full sequence is IQ domain-containing protein F6 (107 aa).

The 30-residue stretch at 42–71 (QEWAVVKVQAQVRMWQARRRFLQARQAACI) folds into the IQ domain.

The polypeptide is IQ domain-containing protein F6 (IQCF6) (Homo sapiens (Human)).